The chain runs to 459 residues: Bifunctional protein GlmU (459 aa).

The interval 1-229 is pyrophosphorylase; the sequence is MSNFAIILAA…FDESLGVNDR (229 aa). UDP-N-acetyl-alpha-D-glucosamine contacts are provided by residues 8 to 11, Lys-22, Gln-72, 77 to 78, 101 to 102, Gly-139, Glu-154, Asn-169, and Asn-227; these read LAAG, GT, and GD. Asp-102 serves as a coordination point for Ca(2+). Position 102 (Asp-102) interacts with Mg(2+). Asn-227 is a binding site for Ca(2+). A Mg(2+)-binding site is contributed by Asn-227. The tract at residues 230-250 is linker; the sequence is VALATAESVMRRRINHKHMVN. Positions 251–459 are N-acetyltransferase; sequence GVSFVNPEAT…TRLPHHPKNQ (209 aa). UDP-N-acetyl-alpha-D-glucosamine is bound by residues Arg-332 and Lys-350. The Proton acceptor role is filled by His-362. The UDP-N-acetyl-alpha-D-glucosamine site is built by Tyr-365 and Asn-376. Residues Ala-379, 385–386, Ser-404, Ala-422, and Arg-439 contribute to the acetyl-CoA site; that span reads NY.

The protein in the N-terminal section; belongs to the N-acetylglucosamine-1-phosphate uridyltransferase family. In the C-terminal section; belongs to the transferase hexapeptide repeat family. In terms of assembly, homotrimer. Mg(2+) is required as a cofactor. Ca(2+) serves as cofactor.

It localises to the cytoplasm. The enzyme catalyses alpha-D-glucosamine 1-phosphate + acetyl-CoA = N-acetyl-alpha-D-glucosamine 1-phosphate + CoA + H(+). It catalyses the reaction N-acetyl-alpha-D-glucosamine 1-phosphate + UTP + H(+) = UDP-N-acetyl-alpha-D-glucosamine + diphosphate. Its pathway is nucleotide-sugar biosynthesis; UDP-N-acetyl-alpha-D-glucosamine biosynthesis; N-acetyl-alpha-D-glucosamine 1-phosphate from alpha-D-glucosamine 6-phosphate (route II): step 2/2. It participates in nucleotide-sugar biosynthesis; UDP-N-acetyl-alpha-D-glucosamine biosynthesis; UDP-N-acetyl-alpha-D-glucosamine from N-acetyl-alpha-D-glucosamine 1-phosphate: step 1/1. It functions in the pathway bacterial outer membrane biogenesis; LPS lipid A biosynthesis. Its function is as follows. Catalyzes the last two sequential reactions in the de novo biosynthetic pathway for UDP-N-acetylglucosamine (UDP-GlcNAc). The C-terminal domain catalyzes the transfer of acetyl group from acetyl coenzyme A to glucosamine-1-phosphate (GlcN-1-P) to produce N-acetylglucosamine-1-phosphate (GlcNAc-1-P), which is converted into UDP-GlcNAc by the transfer of uridine 5-monophosphate (from uridine 5-triphosphate), a reaction catalyzed by the N-terminal domain. This Streptococcus pneumoniae serotype 4 (strain ATCC BAA-334 / TIGR4) protein is Bifunctional protein GlmU.